The sequence spans 130 residues: Large ribosomal subunit protein bL17 (130 aa).

The protein belongs to the bacterial ribosomal protein bL17 family. Part of the 50S ribosomal subunit. Contacts protein L32.

The sequence is that of Large ribosomal subunit protein bL17 from Photorhabdus laumondii subsp. laumondii (strain DSM 15139 / CIP 105565 / TT01) (Photorhabdus luminescens subsp. laumondii).